Here is a 947-residue protein sequence, read N- to C-terminus: Protein translocase subunit SecA 1 (947 aa).

ATP contacts are provided by residues Gln-83, 101 to 105 (GEGKT), and Asp-490. Residues 860–947 (AKAQEQTGQG…KTSKPTRRRG (88 aa)) are disordered. The segment covering 925-934 (TRRERREAAR) has biased composition (basic and acidic residues). Positions 935 to 947 (KQAKTSKPTRRRG) are enriched in basic residues.

The protein belongs to the SecA family. In terms of assembly, monomer and homodimer. Part of the essential Sec protein translocation apparatus which comprises SecA, SecYEG and auxiliary proteins SecDF. Other proteins may also be involved.

Its subcellular location is the cell membrane. The protein localises to the cytoplasm. It carries out the reaction ATP + H2O + cellular proteinSide 1 = ADP + phosphate + cellular proteinSide 2.. Its function is as follows. Part of the Sec protein translocase complex. Interacts with the SecYEG preprotein conducting channel. Has a central role in coupling the hydrolysis of ATP to the transfer of proteins into and across the cell membrane, serving as an ATP-driven molecular motor driving the stepwise translocation of polypeptide chains across the membrane. The sequence is that of Protein translocase subunit SecA 1 from Mycobacterium sp. (strain JLS).